We begin with the raw amino-acid sequence, 394 residues long: Na(+)/H(+) antiporter NhaA (394 aa).

11 helical membrane passes run 14-34, 59-79, 95-115, 125-145, 154-174, 179-199, 213-233, 254-274, 292-312, 328-348, and 363-383; these read AGGL…NSAL, LLLW…GLEV, VFPA…YLLF, GWAI…ALLG, VFLL…IALF, VSLQ…YMNW, LVLW…GVIV, GLHP…NAGV, IATG…WLAV, IFAV…IASL, and LGIL…LRLV.

This sequence belongs to the NhaA Na(+)/H(+) (TC 2.A.33) antiporter family.

The protein localises to the cell inner membrane. The catalysed reaction is Na(+)(in) + 2 H(+)(out) = Na(+)(out) + 2 H(+)(in). Functionally, na(+)/H(+) antiporter that extrudes sodium in exchange for external protons. This chain is Na(+)/H(+) antiporter NhaA, found in Yersinia pseudotuberculosis serotype IB (strain PB1/+).